The chain runs to 418 residues: Putative O-antigen transporter (418 aa).

11 helical membrane passes run 8 to 28 (VWNLFGYAIPTLIAIPSLGFL), 37 to 57 (FGVYTIAIALVGYAGIFDVGL), 85 to 105 (FLVLFSCFGAFLLLIFSDGIV), 124 to 144 (LLAICIPLFILNQLWSAILEG), 165 to 185 (IPAIFVFYSATLSAAVAGLIF), 217 to 237 (LFFFGGWMTVSNIISPVMVYF), 251 to 271 (VAFYSAPAEVILKLGIIPAAI), 297 to 317 (LLMFLICLPVIIIGLLYSGLV), 334 to 354 (LNVLLIGFFFNALAMIPFSAI), 362 to 382 (ITALIHCAELVPYLALLYFMV), and 385 to 405 (YGLLGAAISWSIRVILDALLL).

Belongs to the polysaccharide synthase family.

It localises to the cell inner membrane. The protein operates within bacterial outer membrane biogenesis; lipopolysaccharide biosynthesis. In terms of biological role, could be an O-antigen transporter. In Shigella flexneri, this protein is Putative O-antigen transporter (rfbE).